A 156-amino-acid chain; its full sequence is Ribonuclease pancreatic (156 aa).

The N-terminal stretch at 1 to 28 (MALEKSLALLPLLVLVLLVLGWVQPSLG) is a signal peptide. Positions 33–43 (AKKFQRQHMDS) are enriched in basic and acidic residues. A disordered region spans residues 33-52 (AKKFQRQHMDSDGSPSSNPT). Residues Lys35 and Arg38 each contribute to the substrate site. His40 acts as the Proton acceptor in catalysis. 4 disulfide bridges follow: Cys54–Cys112, Cys68–Cys123, Cys86–Cys138, and Cys93–Cys100. The N-linked (GlcNAc...) asparagine glycan is linked to Asn62. 69–73 (KPVNT) serves as a coordination point for substrate. Residue Asn90 is glycosylated (N-linked (GlcNAc...) asparagine). The substrate site is built by Lys94 and Arg113. Asn116 carries an N-linked (GlcNAc...) asparagine glycan. The active-site Proton donor is the His147.

This sequence belongs to the pancreatic ribonuclease family. As to quaternary structure, monomer. Interacts with and forms tight 1:1 complexes with RNH1. Dimerization of two such complexes may occur. Interaction with RNH1 inhibits this protein.

Its subcellular location is the secreted. The enzyme catalyses an [RNA] containing cytidine + H2O = an [RNA]-3'-cytidine-3'-phosphate + a 5'-hydroxy-ribonucleotide-3'-[RNA].. It catalyses the reaction an [RNA] containing uridine + H2O = an [RNA]-3'-uridine-3'-phosphate + a 5'-hydroxy-ribonucleotide-3'-[RNA].. Its function is as follows. Endonuclease that catalyzes the cleavage of RNA on the 3' side of pyrimidine nucleotides. Acts on single-stranded and double-stranded RNA. The chain is Ribonuclease pancreatic (RNASE1) from Ateles geoffroyi (Black-handed spider monkey).